The sequence spans 334 residues: Glycerol-3-phosphate dehydrogenase [NAD(P)+] (334 aa).

NADPH-binding residues include tryptophan 13, arginine 33, and lysine 106. 3 residues coordinate sn-glycerol 3-phosphate: lysine 106, glycine 137, and serine 139. Alanine 141 contributes to the NADPH binding site. Residues lysine 192, aspartate 245, serine 255, arginine 256, and asparagine 257 each contribute to the sn-glycerol 3-phosphate site. The active-site Proton acceptor is lysine 192. Arginine 256 lines the NADPH pocket. NADPH-binding residues include valine 280 and glutamate 282.

It belongs to the NAD-dependent glycerol-3-phosphate dehydrogenase family.

The protein localises to the cytoplasm. The catalysed reaction is sn-glycerol 3-phosphate + NAD(+) = dihydroxyacetone phosphate + NADH + H(+). The enzyme catalyses sn-glycerol 3-phosphate + NADP(+) = dihydroxyacetone phosphate + NADPH + H(+). It participates in membrane lipid metabolism; glycerophospholipid metabolism. Its function is as follows. Catalyzes the reduction of the glycolytic intermediate dihydroxyacetone phosphate (DHAP) to sn-glycerol 3-phosphate (G3P), the key precursor for phospholipid synthesis. The polypeptide is Glycerol-3-phosphate dehydrogenase [NAD(P)+] (Chlamydia trachomatis serovar L2b (strain UCH-1/proctitis)).